Here is a 589-residue protein sequence, read N- to C-terminus: Malto-oligosyltrehalose trehalohydrolase (589 aa).

256–261 contacts substrate; it reads GFDAVH. Aspartate 258 serves as the catalytic Nucleophile. Glutamate 295 acts as the Proton donor in catalysis. Substrate contacts are provided by residues 320-324 and 390-395; these read DDFHT and HDQIGN.

Belongs to the glycosyl hydrolase 13 family.

It is found in the cytoplasm. The enzyme catalyses hydrolysis of (1-&gt;4)-alpha-D-glucosidic linkage in 4-alpha-D-[(1-&gt;4)-alpha-D-glucanosyl]n trehalose to yield trehalose and (1-&gt;4)-alpha-D-glucan.. It participates in glycan biosynthesis; trehalose biosynthesis. The polypeptide is Malto-oligosyltrehalose trehalohydrolase (treZ) (Brevibacterium helvolum).